The following is a 419-amino-acid chain: MSEDFRPRSDFLQTLLLRGYVHQCSDLEGIDAKAQSGELVAYIGFDCTAPSLHVGSLVQIMMLRWLQKTGGKPIALMGGGTTQVGDPSGKDESRKILSLETIEANKAGIASVFSKFIAFGDGKTQALMVDNAEWLTALKYVDFLRDVGRHFSVNRMMAMDSVKLRLERDQELSFLEFNYMCLQAYDFVELNRRYGCVLQMGGSDQWGNIVTGLDLGRRLGAPQLYALTSPLLTTASGAKMGKTAQGAVWLNEDMLPVFDYWQFWRNCEDRDVGRFLKLFTELPLDETVRLESLGGAEINEAKKILATEATSMAHGREAALLAEEAARQTFEEGALAESLPSIDIDAAEIEAGLGVLAAFVKAGLVASTSEARRQIKGGGLRVNDAPVADERAALQQGDVASGVIKLSLGRKRHVLLKLV.

Tyr42 contributes to the L-tyrosine binding site. The short motif at Cys47–Ser56 is the 'HIGH' region element. The L-tyrosine site is built by Tyr179 and Gln183. Residues Lys239–Thr243 carry the 'KMSKS' region motif. Lys242 provides a ligand contact to ATP. An S4 RNA-binding domain is found at Leu353–Val419.

This sequence belongs to the class-I aminoacyl-tRNA synthetase family. TyrS type 1 subfamily. Homodimer.

It localises to the cytoplasm. It catalyses the reaction tRNA(Tyr) + L-tyrosine + ATP = L-tyrosyl-tRNA(Tyr) + AMP + diphosphate + H(+). Catalyzes the attachment of tyrosine to tRNA(Tyr) in a two-step reaction: tyrosine is first activated by ATP to form Tyr-AMP and then transferred to the acceptor end of tRNA(Tyr). The chain is Tyrosine--tRNA ligase from Methylocella silvestris (strain DSM 15510 / CIP 108128 / LMG 27833 / NCIMB 13906 / BL2).